The chain runs to 310 residues: MKHSYRADEPLWLNYTEAISKTWDIDPTYNAIHGAMKDMGEAKTHRVLAGMALYYHLGFSCQLAEQSTDENFWDVLGNNYEGTKRGTERRYFRGEQGRASLKYIKDNYKTPTDFLLGLHRDKYSDLLKAFGPVPAFGPYFVWKMGDIYDRILGMPIQADNCIEHLPSEPFKGMELVRKEMIARGDASFADYTPQQMFEYMESQTNKLGLIAPPAGDRLLDIREIETAMCGLKHFYTGTDYVGKDLVKHSESLLGYGETADLLRSHMPPVIARDYFMAPASVIKLHGPNRKIDEEGSNPIVKTTGLGSFFR.

The protein belongs to the thymidine aminotransferase family.

It catalyses the reaction 5-phosphomethyl-dUMP in DNA + putrescine = 5-N(alpha)-putrescinyl-dTMP in DNA + phosphate. Functionally, transfers putrescine to 5-phosphomethyl-2'-deoxyuridine (5-PmdU) to produce 5-Nalpha-putrescinylthymidine (Nalpha-PutT) as a step in the pathway leading to thymidine hypermodifications in the viral genome. As a final result of the pathway of hypermodification, Nalpha-PutT substitutes for about 50% of thymidines in the viral DNA. These modifications probably prevent degradation of viral genome by the host restriction-modification antiviral defense system. The chain is Putrescinyltransferase from Delftia phage PhiW-14 (Deftia acidovorans bacteriophage phiW-14).